A 375-amino-acid chain; its full sequence is Peritrophin-48 (375 aa).

The first 20 residues, 1 to 20 (MIIKTLLASVAIMLIATVNA), serve as a signal peptide directing secretion. Chitin-binding type-2 domains are found at residues 25–83 (AKYC…NCIL), 86–143 (DNPC…SDDD), 153–210 (LNIC…MCER), 224–292 (ETLC…GCNR), and 294–360 (EYTT…ACQN). An intrachain disulfide couples cysteine 60 to cysteine 73. The N-linked (GlcNAc...) asparagine glycan is linked to asparagine 117. 4 disulfides stabilise this stretch: cysteine 120-cysteine 133, cysteine 187-cysteine 200, cysteine 265-cysteine 278, and cysteine 330-cysteine 343. N-linked (GlcNAc...) asparagine glycosylation is present at asparagine 360.

In terms of processing, glycosylated. In terms of tissue distribution, cardia and midgut peritrophic membrane.

Its function is as follows. May bind chitin or related oligosaccharide structures. This Lucilia cuprina (Green bottle fly) protein is Peritrophin-48.